The following is a 131-amino-acid chain: Amicyanin (131 aa).

Positions 1 to 26 (MISATKIRSCLAACVLAAFGATGALA) are cleaved as a signal peptide. The 105-residue stretch at 27–131 (DKATIPSESP…PFMRGKVVVE (105 aa)) folds into the Plastocyanin-like domain. His79, Cys118, His121, and Met124 together coordinate Cu cation.

Cu cation serves as cofactor.

The protein resides in the periplasm. It functions in the pathway one-carbon metabolism; methylamine degradation. In terms of biological role, primary acceptor of electrons from methylamine dehydrogenase. Passes those electrons on either a soluble cytochrome c or to pseudoazurin. This is Amicyanin (mauC) from Paracoccus denitrificans.